A 397-amino-acid chain; its full sequence is Multidrug resistance protein MdtH (397 aa).

The next 11 helical transmembrane spans lie at 11-31 (WFLA…MPMI), 32-52 (SLRF…ALGL), 71-91 (FGAR…FASL), 94-114 (AQSG…GCLF), 137-157 (LLMM…SWLL), 163-183 (YVCL…LLIL), 211-231 (LVLI…IFPI), 242-262 (AVGW…YPLA), 291-311 (FANT…GIVI), 340-360 (LALG…YAML), and 366-386 (LPWL…VNCF).

This sequence belongs to the major facilitator superfamily. DHA1 family. MdtH (TC 2.A.1.2.21) subfamily.

It localises to the cell inner membrane. The chain is Multidrug resistance protein MdtH from Aeromonas hydrophila subsp. hydrophila (strain ATCC 7966 / DSM 30187 / BCRC 13018 / CCUG 14551 / JCM 1027 / KCTC 2358 / NCIMB 9240 / NCTC 8049).